The chain runs to 463 residues: Methionine aminopeptidase 2-2 (463 aa).

A disordered region spans residues 1–97 (MGSKSPEGHW…TLSVTELKQT (97 aa)). Residues 27-36 (DPQTSQNGSG) are compositionally biased toward polar residues. Over residues 46–57 (GDDDDDDEDAEE) the composition is skewed to acidic residues. Residues 69–85 (KKKKRKKSNKKKKKKTK) show a composition bias toward basic residues. Residues 86 to 97 (SGTLSVTELKQT) show a composition bias toward polar residues. Histidine 215 is a substrate binding site. Residues aspartate 236, aspartate 247, and histidine 316 each coordinate a divalent metal cation. Histidine 324 is a substrate binding site. 2 residues coordinate a divalent metal cation: glutamate 349 and glutamate 444.

This sequence belongs to the peptidase M24A family. Methionine aminopeptidase eukaryotic type 2 subfamily. Requires Co(2+) as cofactor. It depends on Zn(2+) as a cofactor. Mn(2+) serves as cofactor. The cofactor is Fe(2+).

The protein localises to the cytoplasm. The catalysed reaction is Release of N-terminal amino acids, preferentially methionine, from peptides and arylamides.. In terms of biological role, cotranslationally removes the N-terminal methionine from nascent proteins. The N-terminal methionine is often cleaved when the second residue in the primary sequence is small and uncharged (Met-Ala-, Cys, Gly, Pro, Ser, Thr, or Val). In Neosartorya fischeri (strain ATCC 1020 / DSM 3700 / CBS 544.65 / FGSC A1164 / JCM 1740 / NRRL 181 / WB 181) (Aspergillus fischerianus), this protein is Methionine aminopeptidase 2-2.